The following is a 467-amino-acid chain: UDP-N-acetylmuramate--L-alanine ligase (467 aa).

An ATP-binding site is contributed by 114-120 (GTHGKTT).

The protein belongs to the MurCDEF family.

Its subcellular location is the cytoplasm. It catalyses the reaction UDP-N-acetyl-alpha-D-muramate + L-alanine + ATP = UDP-N-acetyl-alpha-D-muramoyl-L-alanine + ADP + phosphate + H(+). Its pathway is cell wall biogenesis; peptidoglycan biosynthesis. Cell wall formation. The polypeptide is UDP-N-acetylmuramate--L-alanine ligase (Bradyrhizobium diazoefficiens (strain JCM 10833 / BCRC 13528 / IAM 13628 / NBRC 14792 / USDA 110)).